The chain runs to 189 residues: Peptide deformylase (189 aa).

Cys-93 and His-135 together coordinate Fe cation. The active site involves Glu-136. Residue His-139 participates in Fe cation binding.

It belongs to the polypeptide deformylase family. Requires Fe(2+) as cofactor.

It catalyses the reaction N-terminal N-formyl-L-methionyl-[peptide] + H2O = N-terminal L-methionyl-[peptide] + formate. Its function is as follows. Removes the formyl group from the N-terminal Met of newly synthesized proteins. Requires at least a dipeptide for an efficient rate of reaction. N-terminal L-methionine is a prerequisite for activity but the enzyme has broad specificity at other positions. This Karelsulcia muelleri (strain GWSS) (Sulcia muelleri) protein is Peptide deformylase.